A 498-amino-acid chain; its full sequence is ATP synthase subunit beta, chloroplastic (498 aa).

Position 172 to 179 (172 to 179 (GGAGVGKT)) interacts with ATP.

This sequence belongs to the ATPase alpha/beta chains family. As to quaternary structure, F-type ATPases have 2 components, CF(1) - the catalytic core - and CF(0) - the membrane proton channel. CF(1) has five subunits: alpha(3), beta(3), gamma(1), delta(1), epsilon(1). CF(0) has four main subunits: a(1), b(1), b'(1) and c(9-12).

It localises to the plastid. The protein localises to the chloroplast thylakoid membrane. It carries out the reaction ATP + H2O + 4 H(+)(in) = ADP + phosphate + 5 H(+)(out). In terms of biological role, produces ATP from ADP in the presence of a proton gradient across the membrane. The catalytic sites are hosted primarily by the beta subunits. The sequence is that of ATP synthase subunit beta, chloroplastic from Nicotiana tomentosiformis (Tobacco).